The sequence spans 152 residues: Ribosome maturation factor RimP (152 aa).

It belongs to the RimP family.

The protein localises to the cytoplasm. Functionally, required for maturation of 30S ribosomal subunits. The polypeptide is Ribosome maturation factor RimP (Fervidobacterium nodosum (strain ATCC 35602 / DSM 5306 / Rt17-B1)).